The following is a 503-amino-acid chain: Maturase K (503 aa).

This sequence belongs to the intron maturase 2 family. MatK subfamily.

It is found in the plastid. Its subcellular location is the chloroplast. Its function is as follows. Usually encoded in the trnK tRNA gene intron. Probably assists in splicing its own and other chloroplast group II introns. This Thryptomene saxicola (Rock thryptomene) protein is Maturase K.